A 634-amino-acid chain; its full sequence is Threonine--tRNA ligase (634 aa).

The TGS domain maps to 1-61; the sequence is MINITLPDGS…DHDASLRIIT (61 aa). Positions 243 to 534 are catalytic; it reads DHRRIGKAQD…LIEHHAGAFP (292 aa). Residues cysteine 334, histidine 385, and histidine 511 each contribute to the Zn(2+) site.

This sequence belongs to the class-II aminoacyl-tRNA synthetase family. As to quaternary structure, homodimer. The cofactor is Zn(2+).

The protein localises to the cytoplasm. It catalyses the reaction tRNA(Thr) + L-threonine + ATP = L-threonyl-tRNA(Thr) + AMP + diphosphate + H(+). Functionally, catalyzes the attachment of threonine to tRNA(Thr) in a two-step reaction: L-threonine is first activated by ATP to form Thr-AMP and then transferred to the acceptor end of tRNA(Thr). Also edits incorrectly charged L-seryl-tRNA(Thr). This is Threonine--tRNA ligase from Xanthomonas axonopodis pv. citri (strain 306).